A 220-amino-acid chain; its full sequence is Vesicle-associated membrane protein 7 (220 aa).

At alanine 2 the chain carries N-acetylalanine. Residues 2 to 188 (AILFAVVARG…ARAMCMKNLK (187 aa)) are Cytoplasmic-facing. Positions 7 to 110 (VVARGTTILA…AMNSEFSSVL (104 aa)) constitute a Longin domain. One can recognise a v-SNARE coiled-coil homology domain in the interval 125–185 (KVMETQAQVD…RNLARAMCMK (61 aa)). A phosphoserine mark is found at serine 167 and serine 168. A helical; Anchor for type IV membrane protein membrane pass occupies residues 189–209 (LTIIIIIISVVFIYIIVSPLC). Residues 210–220 (GGFTWPNCVKK) lie on the Vesicular side of the membrane.

It belongs to the synaptobrevin family. In terms of assembly, component of the SNARE complex composed of STX4, SNAP23 and VAMP7 that binds SYT7 during lysosomal exocytosis. Component of the SNARE complex composed of STX7, STX8, VAMP7 and VTI1B that is required for heterotypic fusion of late endosomes with lysosomes. May interact with STX17. Interacts with PICALM. Interacts with RAB21.

It localises to the cytoplasmic vesicle. The protein resides in the secretory vesicle membrane. It is found in the golgi apparatus. Its subcellular location is the trans-Golgi network membrane. The protein localises to the late endosome membrane. It localises to the lysosome membrane. The protein resides in the endoplasmic reticulum membrane. It is found in the phagosome membrane. Its subcellular location is the synapse. The protein localises to the synaptosome. Functionally, involved in the targeting and/or fusion of transport vesicles to their target membrane during transport of proteins from the early endosome to the lysosome. Required for heterotypic fusion of late endosomes with lysosomes and homotypic lysosomal fusion. Required for calcium regulated lysosomal exocytosis. Involved in the export of chylomicrons from the endoplasmic reticulum to the cis Golgi. Required for exocytosis of mediators during eosinophil and neutrophil degranulation, and target cell killing by natural killer cells. Required for focal exocytosis of late endocytic vesicles during phagosome formation. In Bos taurus (Bovine), this protein is Vesicle-associated membrane protein 7 (VAMP7).